We begin with the raw amino-acid sequence, 691 residues long: MATSGANGPGSATASASNPRKFSEKIALQKQRQAEETAAFEEVMMDIGSTRLQAQKLRLAYTRSSHYGGSLPNVNQIGCGLAEFQSPLHSPLDSSRSTRHHGLVERVQRDPRRMVSPLRRYPRHIDSSPYSPAYLSPPPESGWRRMMPWGNLPAEKGQLFRLPSALNRTSSDSALHTSVMNPNPQDTYPGPTPPSVLPSRRGGFLDGEMDAKVPAIEENLVDDKHLLKPWDAKKLSSSSSRPRSCEVPGINIFPSPDQPANVPVLPPAMSTGGSLPDLTNLHFPPPLPTPLDPEETVYPSLSGGNSTTNLTHTMTHLGISGGLGLGPSYDVPGLHSPLSHPSLQSSLSNPNLQASLSSPQPQLQGSHSHPSLPASSLAHHALPTTSLGHPSLSAPALSSSSSSSSTSSPVLSAPPYPASTPGASPRHRRVPLSPLSLPAGPADARRSQQQLPKQFSPTMSPTLSSITQGVPLDTSKLPTDQRLPPYPYSPPSLVIPSHPPTPKSLQQLPSQACLVQPSGGQPPGRQPHYGTLYPPGSSGHGQQPYHRPINDFSLGNLEQFNMESPSTSLVLDPPAFSEGPGFLGSEGSVSGPQDSHVLNHQNLTHCSRHGSGPNIILTGDSSPGFSKEIAAALAGVPGFEVSASGLELGLGLEDELRMEPLGLEGLTMLSDPCALLPDPAVEDSFRSDRLQ.

The segment covering 1 to 20 (MATSGANGPGSATASASNPR) has biased composition (polar residues). The disordered stretch occupies residues 1-30 (MATSGANGPGSATASASNPRKFSEKIALQK). Ala-2 bears the N-acetylalanine mark. Arg-51 bears the Asymmetric dimethylarginine; by PRMT6 mark. Phosphoserine occurs at positions 70, 86, and 90. Arg-99, Arg-120, and Arg-123 each carry asymmetric dimethylarginine; by PRMT6. Ser-136 bears the Phosphoserine mark. Arg-161 and Arg-168 each carry asymmetric dimethylarginine; by PRMT6. A Phosphothreonine modification is found at Thr-169. Residue Ser-171 is modified to Phosphoserine; by AMPK, MARK2, SIK1 and SIK2. A compositionally biased stretch (polar residues) spans 174–186 (ALHTSVMNPNPQD). The tract at residues 174–195 (ALHTSVMNPNPQDTYPGPTPPS) is disordered. Thr-192 bears the Phosphothreonine mark. Lys-234 participates in a covalent cross-link: Glycyl lysine isopeptide (Lys-Gly) (interchain with G-Cter in SUMO2). The Nuclear export signal signature appears at 271–287 (TGGSLPDLTNLHFPPPL). Residue Ser-274 is modified to Phosphoserine; by MARK2. 2 disordered regions span residues 280-306 (NLHF…GGNS) and 335-491 (HSPL…YSPP). Ser-306, Ser-368, Ser-393, Ser-433, and Ser-456 each carry phosphoserine. Composition is skewed to low complexity over residues 335–383 (HSPL…HALP) and 390–411 (PSLS…SPVL). A compositionally biased stretch (polar residues) spans 447–468 (SQQQLPKQFSPTMSPTLSSITQ). The residue at position 488 (Tyr-488) is a Phosphotyrosine. Phosphoserine occurs at positions 489 and 492. Residue Thr-501 is modified to Phosphothreonine. The segment at 513–543 (CLVQPSGGQPPGRQPHYGTLYPPGSSGHGQQ) is disordered. Phosphoserine is present on residues Ser-611, Ser-621, and Ser-622.

Belongs to the TORC family. As to quaternary structure, binds, as a tetramer, through its N-terminal region, with the bZIP domain of CREB1. 'Arg-314' in the bZIP domain of CREB1 is essential for this interaction. Interaction, via its C-terminal, with TAF4, enhances recruitment of TAF4 to CREB1. Interacts with SIK2. Interacts with 14-3-3 proteins, YWHAB and YWHAG. Interacts (probably when phosphorylated at Ser-171) with YWHAE. Interacts with calmodulin-dependent catalytic subunit PPP3CA/calcineurin A. Interaction with COP1 mediates nuclear export and degradation of CRTC2. Phosphorylation/dephosphorylation states of Ser-171 are required for regulating transduction of CREB activity. CRTCs/TORCs are inactive when phosphorylated, and active when dephosphorylated at this site. This primary site of phosphorylation, is regulated by cAMP and calcium levels and is dependent on the phosphorylation of SIKs (SIK1 and SIK2) by LKB1. Following adenylyl cyclase activation, dephosphorylated at Ser-171 by PPP3CA/calcineurin A resulting in CRTC2 dissociation from 14-3-3 proteins and PPP3CA. Both insulin and AMPK increase this phosphorylation of CRTC2 while glucagon suppresses it. Phosphorylation at Ser-274 by MARK2 is induced under low glucose conditions and dephosphorylated in response to glucose influx. Phosphorylation at Ser-274 promotes interaction with 14-3-3 proteins and translocation to the cytoplasm. In terms of processing, asymmetric dimethylation of arginine resisues by PRMT6 enhances the association of CRTC2 with CREB on the promoters of gluconeogenic genes.

The protein resides in the cytoplasm. It is found in the nucleus. Its function is as follows. Transcriptional coactivator for CREB1 which activates transcription through both consensus and variant cAMP response element (CRE) sites. Acts as a coactivator, in the SIK/TORC signaling pathway, being active when dephosphorylated and acts independently of CREB1 'Ser-133' phosphorylation. Enhances the interaction of CREB1 with TAF4. Regulates gluconeogenesis as a component of the LKB1/AMPK/TORC2 signaling pathway. Regulates the expression of specific genes such as the steroidogenic gene, StAR. Potent coactivator of PPARGC1A and inducer of mitochondrial biogenesis in muscle cells. The sequence is that of CREB-regulated transcription coactivator 2 (Crtc2) from Rattus norvegicus (Rat).